Reading from the N-terminus, the 344-residue chain is Tripartite motif-containing protein 44 (344 aa).

Disordered regions lie at residues 1-25 (MASG…EPDE) and 68-165 (TPPA…EFDP). Residues 75 to 92 (GAGKEEAEVKVEQEREIE) show a composition bias toward basic and acidic residues. Residues 93 to 165 (SEAGEESESE…ETEAESEFDP (73 aa)) are compositionally biased toward acidic residues. Residues 174–215 (VAKRKCPDHGLDLSTYCQEDRQLICVLCPVIGAHQGHQLSTL) form a B box-type zinc finger. The Zn(2+) site is built by C179, H182, C201, and H207. Residues 290–325 (AHVTEILADIQSHMDRLMTQMAQAKEQLDTSNESAE) adopt a coiled-coil conformation. Residues 309–344 (QMAQAKEQLDTSNESAEPKAEGDEEGPSGASEEEDT) form a disordered region. The segment covering 330 to 344 (GDEEGPSGASEEEDT) has biased composition (acidic residues). Residues S336 and S339 each carry the phosphoserine modification.

In terms of assembly, interacts (via coiled coil) with TRIM17 (via coiled coil).

May play a role in the process of differentiation and maturation of neuronal cells. May regulate the activity of TRIM17. Is a negative regulator of PAX6 expression. The protein is Tripartite motif-containing protein 44 (TRIM44) of Pongo abelii (Sumatran orangutan).